The sequence spans 122 residues: Probable non-specific lipid-transfer protein 3 (122 aa).

Positions Met-1 to Ala-29 are cleaved as a signal peptide. 4 disulfide bridges follow: Cys-33–Cys-81, Cys-43–Cys-58, Cys-59–Cys-104, and Cys-79–Cys-118.

Belongs to the plant LTP family. In terms of tissue distribution, expressed in phloem. Also detected in the epidermis near the vascular tissues in resistant plants infected by Hessian fly larvae.

Its function is as follows. Plant non-specific lipid-transfer proteins transfer phospholipids as well as galactolipids across membranes. May play a role in wax or cutin deposition in the cell walls of expanding epidermal cells and certain secretory tissues. The polypeptide is Probable non-specific lipid-transfer protein 3 (LTP3) (Triticum aestivum (Wheat)).